Consider the following 74-residue polypeptide: DNA-directed RNA polymerase subunit omega (74 aa).

Belongs to the RNA polymerase subunit omega family. In terms of assembly, the RNAP catalytic core consists of 2 alpha, 1 beta, 1 beta' and 1 omega subunit. When a sigma factor is associated with the core the holoenzyme is formed, which can initiate transcription.

It catalyses the reaction RNA(n) + a ribonucleoside 5'-triphosphate = RNA(n+1) + diphosphate. Functionally, promotes RNA polymerase assembly. Latches the N- and C-terminal regions of the beta' subunit thereby facilitating its interaction with the beta and alpha subunits. The protein is DNA-directed RNA polymerase subunit omega of Helicobacter pylori (strain P12).